Reading from the N-terminus, the 348-residue chain is NADH-ubiquinone oxidoreductase chain 2 (348 aa).

Helical transmembrane passes span 3–23, 25–45, 60–80, 99–119, 122–142, 150–170, 178–196, 200–219, 246–266, 274–294, and 328–348; these read PYVLMILISSLGLGTTLTFAS, HWLLAWMGLEINTLAILRLMA, FLTQATAAAMILFAATTNAWA, MMALALKVGLAPMHFWMPEVL, LDLTMGLILSTWQKLAPFALI, NPMLLTTLGLLSTLIGGWGGL, ILAYSSIAHMGWMIIILQY, LTLIALGLYIFMTSAAFLSL, LTLLSLGGLPPLTGFMPKWLI, DLPATATIMALAALLSLYFYL, and LMMIGALGLLPLTPTIMALFF.

Belongs to the complex I subunit 2 family.

Its subcellular location is the mitochondrion inner membrane. The enzyme catalyses a ubiquinone + NADH + 5 H(+)(in) = a ubiquinol + NAD(+) + 4 H(+)(out). Its function is as follows. Core subunit of the mitochondrial membrane respiratory chain NADH dehydrogenase (Complex I) that is believed to belong to the minimal assembly required for catalysis. Complex I functions in the transfer of electrons from NADH to the respiratory chain. The immediate electron acceptor for the enzyme is believed to be ubiquinone. The sequence is that of NADH-ubiquinone oxidoreductase chain 2 (MT-ND2) from Formosania lacustris (Oriental stream loach).